Consider the following 927-residue polypeptide: DIS3-like exonuclease 2 (927 aa).

Residues 1–12 show a composition bias toward basic residues; the sequence is MDLKPNIRRKEK. Positions 1 to 168 are disordered; that stretch reads MDLKPNIRRK…DTNNATEMVS (168 aa). Residues 13–31 show a composition bias toward basic and acidic residues; it reads RNLLKGEAALEKKGSIDRK. Residues 97–106 are compositionally biased toward basic residues; the sequence is VKPKAKKKNS. The span at 107–152 shows a compositional bias: basic and acidic residues; it reads KEKISKSSKQDEHKTDVHKESVSKLSKNLESRNNRDENSAKREKNN. The span at 153–168 shows a compositional bias: polar residues; sequence SHQVEADTNNATEMVS. Mg(2+) contacts are provided by Asp453 and Asp462.

Belongs to the RNR ribonuclease family. DIS3L2 subfamily. Requires Mg(2+) as cofactor. The cofactor is Mn(2+).

The protein resides in the cytoplasm. It is found in the P-body. 3'-5'-exoribonuclease that specifically recognizes RNAs polyuridylated at their 3' end and mediates their degradation. Component of an exosome-independent RNA degradation pathway that mediates degradation of cytoplasmic mRNAs that have been deadenylated and subsequently uridylated at their 3'. This Schizosaccharomyces pombe (strain 972 / ATCC 24843) (Fission yeast) protein is DIS3-like exonuclease 2 (dis32).